The primary structure comprises 337 residues: HTH-type transcriptional repressor PurR (337 aa).

The 55-residue stretch at 2-56 folds into the HTH lacI-type domain; that stretch reads ATIKDVAKLAAVSTTTVSHVINKTRFVAEATQKRVWEAVEELNYAPSAVARSLKC. The segment at residues 4–23 is a DNA-binding region (H-T-H motif); that stretch reads IKDVAKLAAVSTTTVSHVIN. Residues 48–56 mediate DNA binding; it reads SAVARSLKC. Hypoxanthine is bound by residues phenylalanine 73, lysine 189, threonine 191, phenylalanine 220, and aspartate 276.

As to quaternary structure, homodimer.

It participates in purine metabolism; purine nucleotide biosynthesis [regulation]. Functionally, is the main repressor of the genes involved in the de novo synthesis of purine nucleotides, regulating purB, purC, purEK, purF, purHD, purL, purMN and guaBA expression. PurR is allosterically activated to bind its cognate DNA by binding the purine corepressors, hypoxanthine or guanine, thereby effecting transcription repression. This is HTH-type transcriptional repressor PurR from Aliivibrio fischeri (strain ATCC 700601 / ES114) (Vibrio fischeri).